We begin with the raw amino-acid sequence, 423 residues long: Cyclin-dependent kinase 14 (423 aa).

Residues serine 32, serine 49, and serine 88 each carry the phosphoserine modification. Residues 49–64 are compositionally biased toward polar residues; the sequence is SENNACINFKTSSTGK. Residues 49-87 are disordered; sequence SENNACINFKTSSTGKESPKVRRHSSPSSPTSPKFGKAD. One can recognise a Protein kinase domain in the interval 89–373; it reads YEKLEKLGEG…AQAALSHEYF (285 aa). ATP contacts are provided by residues 95–103 and lysine 118; that span reads LGEGSYATV. The active-site Proton acceptor is aspartate 210. A disordered region spans residues 403–423; it reads ESMRAFGKNNSYGKSLSNSKH. Positions 410-423 are enriched in polar residues; sequence KNNSYGKSLSNSKH.

The protein belongs to the protein kinase superfamily. CMGC Ser/Thr protein kinase family. CDC2/CDKX subfamily. Found in a complex with LRP6, CCNY and CAPRIN2 during G2/M stage; CAPRIN2 functions as a scaffold for the complex by binding to CCNY via its N terminus and to CDK14 via its C terminus. Interacts with CCNY; CCNY mediates its recruitment to the plasma membrane and promotes phosphorylation of LRP6. Interacts with CCDN3 and CDKN1A. Interacts with SEPT8. Interacts with 14-3-3 proteina YWHAB, YWHAE, YWHAH and YWHAQ.

Its subcellular location is the cell membrane. It localises to the cytoplasm. The protein localises to the nucleus. The enzyme catalyses L-seryl-[protein] + ATP = O-phospho-L-seryl-[protein] + ADP + H(+). The catalysed reaction is L-threonyl-[protein] + ATP = O-phospho-L-threonyl-[protein] + ADP + H(+). With respect to regulation, serine/threonine-protein kinase activity is promoted by associated cyclins CCDN3 and CCNY and repressed by CDKN1A. Serine/threonine-protein kinase involved in the control of the eukaryotic cell cycle, whose activity is controlled by an associated cyclin. Acts as a cell-cycle regulator of Wnt signaling pathway during G2/M phase by mediating the phosphorylation of LRP6 at 'Ser-1490', leading to the activation of the Wnt signaling pathway. Acts as a regulator of cell cycle progression and cell proliferation via its interaction with CCDN3. Phosphorylates RB1 in vitro, however the relevance of such result remains to be confirmed in vivo. May also play a role in meiosis, neuron differentiation and may indirectly act as a negative regulator of insulin-responsive glucose transport. The polypeptide is Cyclin-dependent kinase 14 (CDK14) (Callithrix jacchus (White-tufted-ear marmoset)).